Consider the following 254-residue polypeptide: Transmembrane protein 269 (254 aa).

The next 5 membrane-spanning stretches (helical) occupy residues 44–64, 69–89, 113–135, 171–191, and 210–230; these read IINA…FCSF, YCAS…GTMT, LASA…IYVL, LTKG…LFMI, and IVYI…TAFY.

Its subcellular location is the membrane. The protein is Transmembrane protein 269 of Mus musculus (Mouse).